Consider the following 245-residue polypeptide: Probable phosphatase YcdX (245 aa).

Zn(2+) contacts are provided by His7, His9, His15, His40, Glu73, His101, His131, Asp192, and His194.

This sequence belongs to the PHP family. As to quaternary structure, homotrimer. It depends on Zn(2+) as a cofactor.

In Escherichia fergusonii (strain ATCC 35469 / DSM 13698 / CCUG 18766 / IAM 14443 / JCM 21226 / LMG 7866 / NBRC 102419 / NCTC 12128 / CDC 0568-73), this protein is Probable phosphatase YcdX.